Reading from the N-terminus, the 356-residue chain is Homoserine O-succinyltransferase (356 aa).

Catalysis depends on Cys146, which acts as the Acyl-thioester intermediate. Residues Lys167 and Ser196 each coordinate substrate. His239 serves as the catalytic Proton acceptor. Glu241 is an active-site residue. Arg253 serves as a coordination point for substrate.

This sequence belongs to the MetA family.

The protein resides in the cytoplasm. The catalysed reaction is L-homoserine + succinyl-CoA = O-succinyl-L-homoserine + CoA. It functions in the pathway amino-acid biosynthesis; L-methionine biosynthesis via de novo pathway; O-succinyl-L-homoserine from L-homoserine: step 1/1. Functionally, transfers a succinyl group from succinyl-CoA to L-homoserine, forming succinyl-L-homoserine. The polypeptide is Homoserine O-succinyltransferase (Thioalkalivibrio nitratireducens (strain DSM 14787 / UNIQEM 213 / ALEN2)).